Here is a 158-residue protein sequence, read N- to C-terminus: 2-C-methyl-D-erythritol 2,4-cyclodiphosphate synthase (158 aa).

The a divalent metal cation site is built by Asp8 and His10. 4-CDP-2-C-methyl-D-erythritol 2-phosphate contacts are provided by residues 8 to 10 (DVH) and 34 to 35 (HS). A divalent metal cation is bound at residue His42. 4-CDP-2-C-methyl-D-erythritol 2-phosphate contacts are provided by residues 56–58 (DIG), 132–135 (TTNE), and Arg142.

The protein belongs to the IspF family. Homotrimer. A divalent metal cation is required as a cofactor.

It carries out the reaction 4-CDP-2-C-methyl-D-erythritol 2-phosphate = 2-C-methyl-D-erythritol 2,4-cyclic diphosphate + CMP. It participates in isoprenoid biosynthesis; isopentenyl diphosphate biosynthesis via DXP pathway; isopentenyl diphosphate from 1-deoxy-D-xylulose 5-phosphate: step 4/6. Involved in the biosynthesis of isopentenyl diphosphate (IPP) and dimethylallyl diphosphate (DMAPP), two major building blocks of isoprenoid compounds. Catalyzes the conversion of 4-diphosphocytidyl-2-C-methyl-D-erythritol 2-phosphate (CDP-ME2P) to 2-C-methyl-D-erythritol 2,4-cyclodiphosphate (ME-CPP) with a corresponding release of cytidine 5-monophosphate (CMP). The polypeptide is 2-C-methyl-D-erythritol 2,4-cyclodiphosphate synthase (Chlorobium phaeobacteroides (strain DSM 266 / SMG 266 / 2430)).